We begin with the raw amino-acid sequence, 200 residues long: dITP/XTP pyrophosphatase (200 aa).

T8–K13 contributes to the substrate binding site. Residue D69 is the Proton acceptor of the active site. D69 is a Mg(2+) binding site. Residues S70, F154 to D157, K177, and H182 to R183 each bind substrate.

This sequence belongs to the HAM1 NTPase family. As to quaternary structure, homodimer. The cofactor is Mg(2+).

The catalysed reaction is XTP + H2O = XMP + diphosphate + H(+). The enzyme catalyses dITP + H2O = dIMP + diphosphate + H(+). It carries out the reaction ITP + H2O = IMP + diphosphate + H(+). In terms of biological role, pyrophosphatase that catalyzes the hydrolysis of nucleoside triphosphates to their monophosphate derivatives, with a high preference for the non-canonical purine nucleotides XTP (xanthosine triphosphate), dITP (deoxyinosine triphosphate) and ITP. Seems to function as a house-cleaning enzyme that removes non-canonical purine nucleotides from the nucleotide pool, thus preventing their incorporation into DNA/RNA and avoiding chromosomal lesions. The sequence is that of dITP/XTP pyrophosphatase from Vibrio cholerae serotype O1 (strain ATCC 39315 / El Tor Inaba N16961).